A 544-amino-acid chain; its full sequence is CTP synthase (544 aa).

The segment at 1–266 is amidoligase domain; it reads MTKFIFVTGG…DDLICERFGL (266 aa). Position 13 (Ser13) interacts with CTP. Ser13 lines the UTP pocket. ATP-binding positions include 14–19 and Asp71; that span reads SLGKGI. Mg(2+) contacts are provided by Asp71 and Glu140. CTP contacts are provided by residues 147–149, 187–192, and Lys223; these read DIE and KTKPTQ. UTP is bound by residues 187-192 and Lys223; that span reads KTKPTQ. The Glutamine amidotransferase type-1 domain maps to 291-543; sequence TVAMVGKYVE…VKAAKNYSEA (253 aa). Gly354 serves as a coordination point for L-glutamine. Catalysis depends on Cys381, which acts as the Nucleophile; for glutamine hydrolysis. L-glutamine-binding positions include 382–385, Glu404, and Arg471; that span reads LGMQ. Residues His516 and Glu518 contribute to the active site.

This sequence belongs to the CTP synthase family. Homotetramer.

It catalyses the reaction UTP + L-glutamine + ATP + H2O = CTP + L-glutamate + ADP + phosphate + 2 H(+). The enzyme catalyses L-glutamine + H2O = L-glutamate + NH4(+). The catalysed reaction is UTP + NH4(+) + ATP = CTP + ADP + phosphate + 2 H(+). Its pathway is pyrimidine metabolism; CTP biosynthesis via de novo pathway; CTP from UDP: step 2/2. Its activity is regulated as follows. Allosterically activated by GTP, when glutamine is the substrate; GTP has no effect on the reaction when ammonia is the substrate. The allosteric effector GTP functions by stabilizing the protein conformation that binds the tetrahedral intermediate(s) formed during glutamine hydrolysis. Inhibited by the product CTP, via allosteric rather than competitive inhibition. Its function is as follows. Catalyzes the ATP-dependent amination of UTP to CTP with either L-glutamine or ammonia as the source of nitrogen. Regulates intracellular CTP levels through interactions with the four ribonucleotide triphosphates. In Psychrobacter arcticus (strain DSM 17307 / VKM B-2377 / 273-4), this protein is CTP synthase.